The sequence spans 523 residues: Effector protein hopAB1 (523 aa).

Disordered regions lie at residues 1-94, 165-223, and 299-320; these read MPGI…EAQQ, VRQQ…QGLD, and RQTT…SGRR. Residues 18 to 31 are compositionally biased toward basic and acidic residues; the sequence is TDGEPVTEREHDSS. The segment covering 181–194 has biased composition (low complexity); the sequence is SSSGSSQRSLIGRS.

It belongs to the HopAB family.

The protein localises to the secreted. Its function is as follows. Effector protein that plays different roles depending on the species and plant cultivars that interact with the pathogen. Acts as a virulence determinant by enhancing the development of disease symptoms and bacterial growth. Acts as an avirulence factor by eliciting hypersensitive response (HR) and plant resistance. This chain is Effector protein hopAB1 (hopAB1), found in Pseudomonas savastanoi pv. glycinea (Pseudomonas syringae pv. glycinea).